The chain runs to 171 residues: Transcription antitermination protein NusB (171 aa).

The protein belongs to the NusB family.

Its function is as follows. Involved in transcription antitermination. Required for transcription of ribosomal RNA (rRNA) genes. Binds specifically to the boxA antiterminator sequence of the ribosomal RNA (rrn) operons. This Brucella abortus (strain S19) protein is Transcription antitermination protein NusB.